A 458-amino-acid polypeptide reads, in one-letter code: Argininosuccinate lyase (458 aa).

Belongs to the lyase 1 family. Argininosuccinate lyase subfamily.

The protein resides in the cytoplasm. It carries out the reaction 2-(N(omega)-L-arginino)succinate = fumarate + L-arginine. The protein operates within amino-acid biosynthesis; L-arginine biosynthesis; L-arginine from L-ornithine and carbamoyl phosphate: step 3/3. This chain is Argininosuccinate lyase, found in Salmonella dublin (strain CT_02021853).